The sequence spans 211 residues: MTKVLFITANPNSAEGSFGMAVGEAFIEAYKNEHPQDEVVTIDLFNTTVPAIDADVFAAWGKFAAGEGFETLTEAQQQKVAAMNTNLETFMNADRYVFVTPMWNFSYPPVVKAYLDNVAIAGKTFKYTENGPVGLLEGKKALHIQATGGVYSEGAYAAVDFGRNHLKTVLGFVGVNDTEYIAVEGMNANPEKAQEIKEAAIANARELAKRF.

102-105 (MWNF) serves as a coordination point for FMN.

Belongs to the azoreductase type 1 family. In terms of assembly, homodimer. The cofactor is FMN.

It catalyses the reaction 2 a quinone + NADH + H(+) = 2 a 1,4-benzosemiquinone + NAD(+). The enzyme catalyses N,N-dimethyl-1,4-phenylenediamine + anthranilate + 2 NAD(+) = 2-(4-dimethylaminophenyl)diazenylbenzoate + 2 NADH + 2 H(+). Its function is as follows. Quinone reductase that provides resistance to thiol-specific stress caused by electrophilic quinones. Also exhibits azoreductase activity. Catalyzes the reductive cleavage of the azo bond in aromatic azo compounds to the corresponding amines. In Bacillus cereus (strain ZK / E33L), this protein is FMN-dependent NADH:quinone oxidoreductase 3.